The following is a 344-amino-acid chain: SUMO-activating enzyme subunit 1 (344 aa).

The protein belongs to the ubiquitin-activating E1 family. As to quaternary structure, heterodimer of sae1 and uba2/sae2. The heterodimer corresponds to the two domains that are encoded on a single polypeptide chain in ubiquitin-activating enzyme E1. Interacts with ube2i.

The protein localises to the nucleus. The protein operates within protein modification; protein sumoylation. Its function is as follows. The heterodimer acts as an E1 ligase for sumo1, sumo2, and sumo3. It mediates ATP-dependent activation of sumo proteins followed by formation of a thioester bond between a sumo protein and a conserved active site cysteine residue on uba2/sae2. The polypeptide is SUMO-activating enzyme subunit 1 (sae1) (Xenopus laevis (African clawed frog)).